Consider the following 364-residue polypeptide: Fructose-1,6-bisphosphatase class 1 2 (364 aa).

Positions 99, 121, 123, and 124 each coordinate Mg(2+). Residues 124-127 and N220 each bind substrate; that span reads DGSS. E292 is a Mg(2+) binding site.

The protein belongs to the FBPase class 1 family. Homotetramer. Mg(2+) is required as a cofactor.

The protein localises to the cytoplasm. It carries out the reaction beta-D-fructose 1,6-bisphosphate + H2O = beta-D-fructose 6-phosphate + phosphate. It functions in the pathway carbohydrate biosynthesis; gluconeogenesis. The protein is Fructose-1,6-bisphosphatase class 1 2 of Polaromonas naphthalenivorans (strain CJ2).